Consider the following 601-residue polypeptide: NADH-quinone oxidoreductase subunit C/D (601 aa).

Residues 1–191 (MKLTRDFPSN…DPFMLDAAKQ (191 aa)) are NADH dehydrogenase I subunit C. Residues 215 to 601 (DYMFLNLGPN…IDFVMSDVDR (387 aa)) form an NADH dehydrogenase I subunit D region.

The protein in the N-terminal section; belongs to the complex I 30 kDa subunit family. This sequence in the C-terminal section; belongs to the complex I 49 kDa subunit family. In terms of assembly, NDH-1 is composed of 13 different subunits. Subunits NuoB, CD, E, F, and G constitute the peripheral sector of the complex.

The protein resides in the cell inner membrane. It catalyses the reaction a quinone + NADH + 5 H(+)(in) = a quinol + NAD(+) + 4 H(+)(out). Its function is as follows. NDH-1 shuttles electrons from NADH, via FMN and iron-sulfur (Fe-S) centers, to quinones in the respiratory chain. The immediate electron acceptor for the enzyme in this species is believed to be ubiquinone. Couples the redox reaction to proton translocation (for every two electrons transferred, four hydrogen ions are translocated across the cytoplasmic membrane), and thus conserves the redox energy in a proton gradient. The sequence is that of NADH-quinone oxidoreductase subunit C/D from Aeromonas salmonicida (strain A449).